Consider the following 276-residue polypeptide: MVKGPGLYTEIGKKARDLLYKDHNSDQKFSITTFSPAGVAITSTGTKKGDLLLGDVAFQSRRKNITTDLKVCTDSTFLITATVDEAAPGLRSIFSFKVPDQNSGKVELQYLHEYAGISTSMGLTQNPTVNFSGVIGSNVLAVGTDVSFDTKSGNFTKINAGLSFTKEDLIASLTVNDKGDLLNASYYHIVNPLFNTAVGAEVSHKLSSKDSTITVGTQHSLDPLTSVKARVNSAGIASALIQHEWKPKSFFTISGEVDTKSIDKSAKVGLALALKP.

The protein belongs to the eukaryotic mitochondrial porin (TC 1.B.8.1) family. As to expression, expressed in shoot meristems, root meristematic zone, lateral roots, leaves, stigma and anthers.

The protein localises to the mitochondrion outer membrane. Functionally, forms a channel through the mitochondrial outer membrane that allows diffusion of small hydrophilic molecules. The channel adopts an open conformation at low or zero membrane potential and a closed conformation at potentials above 30-40 mV. The open state has a weak anion selectivity whereas the closed state is cation-selective. Involved in plant development at reproductive stage, is important for pollen development and may regulate hydrogen peroxide generation during disease resistance. The sequence is that of Mitochondrial outer membrane protein porin 1 (VDAC1) from Arabidopsis thaliana (Mouse-ear cress).